The following is a 568-amino-acid chain: Proline--tRNA ligase (568 aa).

Belongs to the class-II aminoacyl-tRNA synthetase family. ProS type 1 subfamily. Homodimer.

The protein resides in the cytoplasm. The enzyme catalyses tRNA(Pro) + L-proline + ATP = L-prolyl-tRNA(Pro) + AMP + diphosphate. Catalyzes the attachment of proline to tRNA(Pro) in a two-step reaction: proline is first activated by ATP to form Pro-AMP and then transferred to the acceptor end of tRNA(Pro). As ProRS can inadvertently accommodate and process non-cognate amino acids such as alanine and cysteine, to avoid such errors it has two additional distinct editing activities against alanine. One activity is designated as 'pretransfer' editing and involves the tRNA(Pro)-independent hydrolysis of activated Ala-AMP. The other activity is designated 'posttransfer' editing and involves deacylation of mischarged Ala-tRNA(Pro). The misacylated Cys-tRNA(Pro) is not edited by ProRS. The protein is Proline--tRNA ligase of Lysinibacillus sphaericus (strain C3-41).